Reading from the N-terminus, the 737-residue chain is Relaxin receptor 2 (737 aa).

Residues 1–399 (MFPLLHFIVL…SSFEDLLANN (399 aa)) lie on the Extracellular side of the membrane. Residues 27 to 64 (LCQKGYFPCGNLTKCLPRAFHCDGVDDCGNGADEDNCG) form the LDL-receptor class A domain. 3 cysteine pairs are disulfide-bonded: C28/C41, C35/C54, and C48/C63. N-linked (GlcNAc...) asparagine glycosylation is present at N37. N121 carries an N-linked (GlcNAc...) asparagine glycan. LRR repeat units follow at residues 121 to 142 (NTTL…VFTK), 145 to 166 (QLKQ…AFFG), 169 to 190 (NLQI…VFKD), 193 to 214 (QLTW…LFTG), 217 to 238 (SLFF…MCAQ), 241 to 262 (QLNW…SFLS), 265 to 286 (SLTV…TFSS), 289 to 310 (NLGE…IFKD), 313 to 334 (LLQK…QFES), and 337 to 358 (QLQS…MFQP). The N-linked (GlcNAc...) asparagine glycan is linked to N257. The N-linked (GlcNAc...) asparagine glycan is linked to N318. N-linked (GlcNAc...) asparagine glycosylation is present at N361. A helical transmembrane segment spans residues 400-420 (ILRIFVWVIAFITCFGNLFVI). The Cytoplasmic segment spans residues 421–438 (GMRSFIKAENTTHATSIK). Residues 439–459 (ILCCADCLMGVYLFFIGFFDI) form a helical membrane-spanning segment. Residues 460–478 (KYRGQYQKYALLWMESLQC) lie on the Extracellular side of the membrane. C478 and C556 are disulfide-bonded. The chain crosses the membrane as a helical span at residues 479–501 (RLMGFLAMLSTEVSVLLLTYLTL). The Cytoplasmic segment spans residues 502-520 (EKFLAIVFPFSNIRPGKWQ). Residues 521-541 (TMVILICIWIVGFLIAVIPFW) form a helical membrane-spanning segment. The Extracellular portion of the chain corresponds to 542–575 (KEDYFGNFYGKNGVCFPLYYDQTEDIGSKGYSLG). Residues 576–596 (IFLGVNLLAFLIIVFSYTIMF) traverse the membrane as a helical segment. Residues 597 to 622 (CSIKKTALQTSEVRNPIGREVAVANR) are Cytoplasmic-facing. A helical membrane pass occupies residues 623-643 (FFFIVFSDAICWIPVFVIKIL). At 644–653 (SLFRVEIPGT) the chain is on the extracellular side. Residues 654-674 (ITSWIVIFFLPVNSALNPILY) traverse the membrane as a helical segment. Residues 675–737 (TLTTSFFKDK…LGDSIVKPIS (63 aa)) lie on the Cytoplasmic side of the membrane.

This sequence belongs to the G-protein coupled receptor 1 family.

The protein resides in the cell membrane. Its function is as follows. Receptor for relaxin. The activity of this receptor is mediated by G proteins leading to stimulation of adenylate cyclase and an increase of cAMP. May also be a receptor for Leydig insulin-like peptide (INSL3). The chain is Relaxin receptor 2 (RXFP2) from Canis lupus familiaris (Dog).